Reading from the N-terminus, the 151-residue chain is uncharacterized protein (151 aa).

This is an uncharacterized protein from Methanocaldococcus jannaschii (strain ATCC 43067 / DSM 2661 / JAL-1 / JCM 10045 / NBRC 100440) (Methanococcus jannaschii).